A 356-amino-acid polypeptide reads, in one-letter code: Chorismate synthase (356 aa).

NADP(+) is bound by residues Arg-48 and Arg-54. FMN-binding positions include 125 to 127 (RSS), 237 to 238 (NA), Gly-282, 297 to 301 (KPTSS), and Arg-323.

It belongs to the chorismate synthase family. Homotetramer. FMNH2 serves as cofactor.

It catalyses the reaction 5-O-(1-carboxyvinyl)-3-phosphoshikimate = chorismate + phosphate. It functions in the pathway metabolic intermediate biosynthesis; chorismate biosynthesis; chorismate from D-erythrose 4-phosphate and phosphoenolpyruvate: step 7/7. Its function is as follows. Catalyzes the anti-1,4-elimination of the C-3 phosphate and the C-6 proR hydrogen from 5-enolpyruvylshikimate-3-phosphate (EPSP) to yield chorismate, which is the branch point compound that serves as the starting substrate for the three terminal pathways of aromatic amino acid biosynthesis. This reaction introduces a second double bond into the aromatic ring system. The sequence is that of Chorismate synthase from Rhizorhabdus wittichii (strain DSM 6014 / CCUG 31198 / JCM 15750 / NBRC 105917 / EY 4224 / RW1) (Sphingomonas wittichii).